A 441-amino-acid polypeptide reads, in one-letter code: Mitochondrial distribution and morphology protein 12 (441 aa).

The SMP-LTD domain maps to 1–441 (MSIDIDWERA…VYPSFWTFLV (441 aa)). Disordered regions lie at residues 68–89 (DFYE…PMRE) and 183–289 (RAVT…RMRE). Polar residues-rich tracts occupy residues 226–245 (SRPS…SVST) and 253–263 (PSQTLLANNPG).

It belongs to the MDM12 family. In terms of assembly, component of the ER-mitochondria encounter structure (ERMES) or MDM complex, composed of MMM1, MDM10, MDM12 and MDM34. An MMM1 homodimer associates with one molecule of MDM12 on each side in a pairwise head-to-tail manner, and the SMP-LTD domains of MMM1 and MDM12 generate a continuous hydrophobic tunnel for phospholipid trafficking.

It localises to the mitochondrion outer membrane. The protein localises to the endoplasmic reticulum membrane. In terms of biological role, component of the ERMES/MDM complex, which serves as a molecular tether to connect the endoplasmic reticulum (ER) and mitochondria. Components of this complex are involved in the control of mitochondrial shape and protein biogenesis, and function in nonvesicular lipid trafficking between the ER and mitochondria. MDM12 is required for the interaction of the ER-resident membrane protein MMM1 and the outer mitochondrial membrane-resident beta-barrel protein MDM10. The MDM12-MMM1 subcomplex functions in the major beta-barrel assembly pathway that is responsible for biogenesis of all mitochondrial outer membrane beta-barrel proteins, and acts in a late step after the SAM complex. The MDM10-MDM12-MMM1 subcomplex further acts in the TOM40-specific pathway after the action of the MDM12-MMM1 complex. Essential for establishing and maintaining the structure of mitochondria and maintenance of mtDNA nucleoids. This is Mitochondrial distribution and morphology protein 12 from Paracoccidioides lutzii (strain ATCC MYA-826 / Pb01) (Paracoccidioides brasiliensis).